The sequence spans 136 residues: Large ribosomal subunit protein uL16 (136 aa).

It belongs to the universal ribosomal protein uL16 family. Part of the 50S ribosomal subunit.

In terms of biological role, binds 23S rRNA and is also seen to make contacts with the A and possibly P site tRNAs. The polypeptide is Large ribosomal subunit protein uL16 (Ehrlichia chaffeensis (strain ATCC CRL-10679 / Arkansas)).